A 126-amino-acid chain; its full sequence is Fatty acid-binding protein 10-A, liver basic (126 aa).

4 residues coordinate cholate: Lys-57, Lys-77, His-99, and Gln-101.

The protein belongs to the calycin superfamily. Fatty-acid binding protein (FABP) family. As to expression, expressed in the developing embryonic liver from 48 hpf. Also expressed in the liver of 5-day-old larvae. In adults, primarily expressed in the liver, with weak expression in the testis and intestine.

The protein localises to the cytoplasm. Functionally, binds hydrophobic ligands, such as cholate, in the cytoplasm. May be involved in intracellular lipid transport. Binds one cholate per subunit. The polypeptide is Fatty acid-binding protein 10-A, liver basic (fabp10a) (Danio rerio (Zebrafish)).